A 181-amino-acid chain; its full sequence is Large ribosomal subunit protein uL6 (181 aa).

The protein belongs to the universal ribosomal protein uL6 family. In terms of assembly, part of the 50S ribosomal subunit.

This protein binds to the 23S rRNA, and is important in its secondary structure. It is located near the subunit interface in the base of the L7/L12 stalk, and near the tRNA binding site of the peptidyltransferase center. The chain is Large ribosomal subunit protein uL6 from Saccharolobus solfataricus (strain ATCC 35092 / DSM 1617 / JCM 11322 / P2) (Sulfolobus solfataricus).